The primary structure comprises 250 residues: Probable transcriptional regulatory protein ckrop_1032 (250 aa).

Residues 1–22 (MSGHSKWATTKHKKAANDAKRG) form a disordered region.

This sequence belongs to the TACO1 family.

The protein localises to the cytoplasm. The protein is Probable transcriptional regulatory protein ckrop_1032 of Corynebacterium kroppenstedtii (strain DSM 44385 / JCM 11950 / CIP 105744 / CCUG 35717).